The following is a 399-amino-acid chain: Bifunctional enzyme IspD/IspF (399 aa).

The interval 1–239 is 2-C-methyl-D-erythritol 4-phosphate cytidylyltransferase; the sequence is MHTWALLLAA…SSEKKNMQVP (239 aa). The interval 240-399 is 2-C-methyl-D-erythritol 2,4-cyclodiphosphate synthase; it reads CVGWGYDVHR…AVTALRRVSS (160 aa). Residues Asp-246 and His-248 each coordinate a divalent metal cation. 4-CDP-2-C-methyl-D-erythritol 2-phosphate is bound by residues 246–248 and 273–274; these read DVH and HS. His-281 serves as a coordination point for a divalent metal cation. 4-CDP-2-C-methyl-D-erythritol 2-phosphate is bound by residues 295 to 297, 300 to 304, 371 to 374, and Phe-378; these read DIG, FPDTD, and TTEE.

The protein in the N-terminal section; belongs to the IspD/TarI cytidylyltransferase family. IspD subfamily. It in the C-terminal section; belongs to the IspF family. The cofactor is a divalent metal cation.

The catalysed reaction is 2-C-methyl-D-erythritol 4-phosphate + CTP + H(+) = 4-CDP-2-C-methyl-D-erythritol + diphosphate. The enzyme catalyses 4-CDP-2-C-methyl-D-erythritol 2-phosphate = 2-C-methyl-D-erythritol 2,4-cyclic diphosphate + CMP. It participates in isoprenoid biosynthesis; isopentenyl diphosphate biosynthesis via DXP pathway; isopentenyl diphosphate from 1-deoxy-D-xylulose 5-phosphate: step 2/6. It functions in the pathway isoprenoid biosynthesis; isopentenyl diphosphate biosynthesis via DXP pathway; isopentenyl diphosphate from 1-deoxy-D-xylulose 5-phosphate: step 4/6. Bifunctional enzyme that catalyzes the formation of 4-diphosphocytidyl-2-C-methyl-D-erythritol from CTP and 2-C-methyl-D-erythritol 4-phosphate (MEP) (IspD), and catalyzes the conversion of 4-diphosphocytidyl-2-C-methyl-D-erythritol 2-phosphate (CDP-ME2P) to 2-C-methyl-D-erythritol 2,4-cyclodiphosphate (ME-CPP) with a corresponding release of cytidine 5-monophosphate (CMP) (IspF). This is Bifunctional enzyme IspD/IspF from Oleidesulfovibrio alaskensis (strain ATCC BAA-1058 / DSM 17464 / G20) (Desulfovibrio alaskensis).